The following is a 276-amino-acid chain: Triple specificity protein phosphatase PtpB (276 aa).

The Phosphocysteine intermediate role is filled by cysteine 160. Residues 232–250 are UIM-like region; it reads LGVRAEYLAAARQTIDETY.

Belongs to the protein-tyrosine phosphatase family. As to quaternary structure, interacts (via UIM-like region) with host ubiquitin; activating the phosphatidylinositol phosphate phosphatase activity.

The protein localises to the secreted. It is found in the host cytoplasm. It localises to the host cell membrane. The enzyme catalyses O-phospho-L-tyrosyl-[protein] + H2O = L-tyrosyl-[protein] + phosphate. It carries out the reaction O-phospho-L-seryl-[protein] + H2O = L-seryl-[protein] + phosphate. The catalysed reaction is O-phospho-L-threonyl-[protein] + H2O = L-threonyl-[protein] + phosphate. It catalyses the reaction 1,2-dioctanoyl-sn-glycero-3-phospho-(1-D-myo-inositol-3-phosphate) + H2O = 1,2-dioctanoyl-sn-glycero-3-phospho-(1D-myo-inositol) + phosphate. The enzyme catalyses 1,2-dioctanoyl-sn-glycero-3-phospho-(1-D-myo-inositol-4-phosphate) + H2O = 1,2-dioctanoyl-sn-glycero-3-phospho-(1D-myo-inositol) + phosphate. It carries out the reaction 1,2-dioctanoyl-sn-glycero-3-phospho-(1D-myo-inositol-5-phosphate) + H2O = 1,2-dioctanoyl-sn-glycero-3-phospho-(1D-myo-inositol) + phosphate. With respect to regulation, binding to host ubiquitin is required to activate the phosphatidylinositol phosphate phosphatase activity. Phosphatase activity is inhibited by sodium orthovanadate, a specific inhibitor of tyrosine phosphatases, but not by okadaic acid, an inhibitor of serine/threonine phosphatases. Inhibition of the enzyme reduces mycobacterial survival in infected macrophages. Inhibitors also enhance killing efficacy by first-line antibiotics. Essential virulence factor that promotes mycobacterial survival within host macrophages. Acts as a phosphatase that possesses triple substrate specificity toward phosphotyrosine, phosphoserine/threonine and phosphoinositides. Supports mycobacteria survival during infection by modulating the normal host signaling pathways, attenuating the bactericidal immune responses and promoting the host cell survival. Inhibits host pyroptosis by disrupting the membrane localization of host gasdermin-D (GSDMD): acts by catalyzing dephosphorylation of phosphatidylinositol (4,5)-bisphosphate and phosphatidylinositol 4-phosphate, thereby inhibiting the membrane targeting of GSDMD and subsequent cytokine release and pyroptosis. Inhibits host inflammatory responses and apoptosis through impeding the NF-kappa-B and MAPK signal pathways and TP53/p53 expression in the macrophage. Blocks the IL6/IL-6 production by down-regulating ERK1/2, p38 and p65 activity. Prevents macrophage cell death by activating the Akt pathway and blocking caspase 3 activity. Reduces the expression of iNOS in activated macrophages and inhibits the generation of destroying reactive nitrogen intermediate NO. The sequence is that of Triple specificity protein phosphatase PtpB from Mycobacterium tuberculosis (strain ATCC 25618 / H37Rv).